The chain runs to 352 residues: Phosphoribosylformylglycinamidine cyclo-ligase (352 aa).

It belongs to the AIR synthase family.

The protein localises to the cytoplasm. It carries out the reaction 2-formamido-N(1)-(5-O-phospho-beta-D-ribosyl)acetamidine + ATP = 5-amino-1-(5-phospho-beta-D-ribosyl)imidazole + ADP + phosphate + H(+). It participates in purine metabolism; IMP biosynthesis via de novo pathway; 5-amino-1-(5-phospho-D-ribosyl)imidazole from N(2)-formyl-N(1)-(5-phospho-D-ribosyl)glycinamide: step 2/2. This chain is Phosphoribosylformylglycinamidine cyclo-ligase, found in Stenotrophomonas maltophilia (strain K279a).